Reading from the N-terminus, the 20-residue chain is Phospholipase A2 II-5b (20 aa).

Belongs to the phospholipase A2 family. Group I subfamily. Ca(2+) is required as a cofactor. In terms of tissue distribution, expressed by the venom gland.

The protein localises to the secreted. The enzyme catalyses a 1,2-diacyl-sn-glycero-3-phosphocholine + H2O = a 1-acyl-sn-glycero-3-phosphocholine + a fatty acid + H(+). Its function is as follows. Snake venom phospholipase A2 (PLA2) that exhibits weak enzymatic activity. PLA2 catalyzes the calcium-dependent hydrolysis of the 2-acyl groups in 3-sn-phosphoglycerides. In Notechis scutatus scutatus (Mainland tiger snake), this protein is Phospholipase A2 II-5b.